Here is a 311-residue protein sequence, read N- to C-terminus: Apolipoprotein E (311 aa).

An N-terminal signal peptide occupies residues 1–18; the sequence is MKALWAVLLVTLLTGCLA. Repeat copies occupy residues 72–93, 94–115, 116–137, 138–159, 160–181, 182–203, 204–225, and 226–247. The segment at 72–247 is 8 X 22 AA approximate tandem repeats; the sequence is ALMEDTMTEV…RLEEVREHME (176 aa). Methionine 135 carries the post-translational modification Methionine sulfoxide. Phosphoserine is present on serine 139. Residues 150–160 form an LDL and other lipoprotein receptors binding region; that stretch reads HLRKMRKRLMR. Position 154–157 (154–157) interacts with heparin; the sequence is MRKR. A lipid-binding and lipoprotein association region spans residues 202-282; that stretch reads TANLGAGAAQ…GWFEPIVEDM (81 aa). Residue 221–228 coordinates heparin; that stretch reads GDRIRGRL. Residues 258-311 are homooligomerization; it reads QQIRLQAEIFQARLKGWFEPIVEDMHRQWANLMEKIQASVATNPIITPVAQENQ. A specificity for association with VLDL region spans residues 270-282; the sequence is RLKGWFEPIVEDM.

It belongs to the apolipoprotein A1/A4/E family. Homotetramer. May interact with ABCA1; functionally associated with ABCA1 in the biogenesis of HDLs. May interact with APP/A4 amyloid-beta peptide; the interaction is extremely stable in vitro but its physiological significance is unclear. May interact with MAPT. May interact with MAP2. In the cerebrospinal fluid, interacts with secreted SORL1. Interacts with PMEL; this allows the loading of PMEL luminal fragment on ILVs to induce fibril nucleation. Post-translationally, APOE exists as multiple glycosylated and sialylated glycoforms within cells and in plasma. The extent of glycosylation and sialylation are tissue and context specific. In terms of processing, glycated in plasma VLDL. Phosphorylated by FAM20C in the extracellular medium.

It localises to the secreted. The protein localises to the extracellular space. It is found in the extracellular matrix. Its subcellular location is the extracellular vesicle. The protein resides in the endosome. It localises to the multivesicular body. Functionally, APOE is an apolipoprotein, a protein associating with lipid particles, that mainly functions in lipoprotein-mediated lipid transport between organs via the plasma and interstitial fluids. APOE is a core component of plasma lipoproteins and is involved in their production, conversion and clearance. Apolipoproteins are amphipathic molecules that interact both with lipids of the lipoprotein particle core and the aqueous environment of the plasma. As such, APOE associates with chylomicrons, chylomicron remnants, very low density lipoproteins (VLDL) and intermediate density lipoproteins (IDL) but shows a preferential binding to high-density lipoproteins (HDL). It also binds a wide range of cellular receptors including the LDL receptor/LDLR and the very low-density lipoprotein receptor/VLDLR that mediate the cellular uptake of the APOE-containing lipoprotein particles. Finally, APOE also has a heparin-binding activity and binds heparan-sulfate proteoglycans on the surface of cells, a property that supports the capture and the receptor-mediated uptake of APOE-containing lipoproteins by cells. The chain is Apolipoprotein E (Apoe) from Mus musculus (Mouse).